The sequence spans 150 residues: Snaclec 7 (150 aa).

An N-terminal signal peptide occupies residues 1-23; it reads MGRFISISFGLLVVFLSLSGTGA. Disulfide bonds link cysteine 27/cysteine 38, cysteine 55/cysteine 144, and cysteine 121/cysteine 136. The 112-residue stretch at 34-145 folds into the C-type lectin domain; sequence YEGYCYKVFN…CNDPRYFVCK (112 aa).

It belongs to the snaclec family. In terms of assembly, heterodimer; disulfide-linked.

It is found in the secreted. Functionally, interferes with one step of hemostasis (modulation of platelet aggregation, or coagulation cascade, for example). This Daboia siamensis (Eastern Russel's viper) protein is Snaclec 7.